A 765-amino-acid polypeptide reads, in one-letter code: MKTPWKVLLGLLAIAALVTVITVPVVLLTKGNDASTDSRRTYTLADYLKNTFRMKFYNLRWVSDHEYLYKQENNILLFNAEYGNSSIFLENSTFDEFGHSINDYSVSPDRQYILFEYNYVKQWRHSYTASYDIYDLNKRQLITEERIPNNTQWITWSSVGHKLAYVWNNDIYVKNEPNSPSQRITWTGKKDVIYNGITDWVYEEEVFSAYSALWWSPNSTFLAYAQFNDTEVPLIEYSFYSDESLQYPKTVKIPYPKAGAVNPTIKFFVVNISSLSPNINATSQQIVPPGSVLIGDHYLCDVTWVTEERISLQWLRRIQNYSIMDICDYDRSTGRWISSVGRQHIEISTTGWVGRFRPAEPHFTSDGNSFYKIISNEEGYKHICHFQTDKRNCTFITKGAWEVIGIEALTSDYLYYISNEYKGMPGARNLYKIQLNDYTKVTCLSCELNPDRCQYYSVSFSQEAKYYQLRCSGPGLPLYTLHNSNNDKELRVLENNSDLDQVLQDVQMPSKKLDFIHLHGTKFWYQMILPPHFDKSKKYPLLLEVYAGPCSQKADAIFRLNWATYLASTENIIVASFDGRGSGYQGDKIMHAINRRLGTFEVEDQIEATRQFSKMGFVDDKRIAIWGWSYGGYVTSMVLGAGSGVFKCGIAVAPVSKWEYYDSVYTERYMGLPTPEDNLDSYRNSTVMSRAENFKQVEYLLIHGTADDNVHFQQSAQISKALVDAGVDFQSMWYTDEDHGIASSTAHQHIYTHMSHFLKQCFSLL.

Over 1–6 (MKTPWK) the chain is Cytoplasmic. The chain crosses the membrane as a helical; Signal-anchor for type II membrane protein span at residues 7–29 (VLLGLLAIAALVTVITVPVVLLT). At 30–765 (KGNDASTDSR…HFLKQCFSLL (736 aa)) the chain is on the extracellular side. N-linked (GlcNAc...) asparagine glycosylation is found at Asn84, Asn91, Asn149, Asn218, Asn228, Asn271, Asn280, Asn320, and Asn392. Disulfide bonds link Cys384–Cys393, Cys443–Cys446, and Cys453–Cys471. N-linked (GlcNAc...) asparagine glycosylation is present at Asn495. Catalysis depends on Ser629, which acts as the Charge relay system. A disulfide bridge links Cys648 with Cys761. Asn684 carries an N-linked (GlcNAc...) asparagine glycan. Catalysis depends on charge relay system residues Asp707 and His739.

The protein belongs to the peptidase S9B family. DPPIV subfamily. In terms of assembly, monomer. Homodimer. Heterodimer with Seprase (FAP). Requires homodimerization for optimal dipeptidyl peptidase activity and T-cell costimulation. Found in a membrane raft complex, at least composed of BCL10, CARD11, DPP4 and IKBKB. Associates with collagen. Interacts with PTPRC; the interaction is enhanced in an interleukin-12-dependent manner in activated lymphocytes. Interacts (via extracellular domain) with ADA; does not inhibit its dipeptidyl peptidase activity. Interacts with CAV1 (via the N-terminus); the interaction is direct. Interacts (via cytoplasmic tail) with CARD11 (via PDZ domain); its homodimerization is necessary for interaction with CARD11. Interacts with IGF2R; the interaction is direct. Interacts with GPC3. The soluble form (Dipeptidyl peptidase 4 soluble form also named SDPP) derives from the membrane form (Dipeptidyl peptidase 4 membrane form also named MDPP) by proteolytic processing. Post-translationally, N- and O-Glycosylated. In terms of processing, phosphorylated. Mannose 6-phosphate residues in the carbohydrate moiety are necessary for interaction with IGF2R in activated T-cells. Mannose 6-phosphorylation is induced during T-cell activation. As to expression, intestinal epithelium, dendritic cells and several immune system tissues.

Its subcellular location is the secreted. The protein resides in the cell membrane. It is found in the apical cell membrane. It localises to the cell projection. The protein localises to the invadopodium membrane. Its subcellular location is the lamellipodium membrane. The protein resides in the cell junction. It is found in the membrane raft. The enzyme catalyses Release of an N-terminal dipeptide, Xaa-Yaa-|-Zaa-, from a polypeptide, preferentially when Yaa is Pro, provided Zaa is neither Pro nor hydroxyproline.. Its activity is regulated as follows. Inhibited by GPC3 and diprotin A. In terms of biological role, cell surface glycoprotein receptor involved in the costimulatory signal essential for T-cell receptor (TCR)-mediated T-cell activation. Acts as a positive regulator of T-cell coactivation, by binding at least ADA, CAV1, IGF2R, and PTPRC. Its binding to CAV1 and CARD11 induces T-cell proliferation and NF-kappa-B activation in a T-cell receptor/CD3-dependent manner. Its interaction with ADA also regulates lymphocyte-epithelial cell adhesion. In association with FAP is involved in the pericellular proteolysis of the extracellular matrix (ECM), the migration and invasion of endothelial cells into the ECM. May be involved in the promotion of lymphatic endothelial cells adhesion, migration and tube formation. When overexpressed, enhanced cell proliferation, a process inhibited by GPC3. Also acts as a serine exopeptidase with a dipeptidyl peptidase activity that regulates various physiological processes by cleaving peptides in the circulation, including many chemokines, mitogenic growth factors, neuropeptides and peptide hormones. Removes N-terminal dipeptides sequentially from polypeptides having unsubstituted N-termini provided that the penultimate residue is proline. The protein is Dipeptidyl peptidase 4 (DPP4) of Bos taurus (Bovine).